A 483-amino-acid polypeptide reads, in one-letter code: Glycogen synthase kinase-3 alpha (483 aa).

Residues 1 to 15 (MSGGGPSGGGPGGSG) show a composition bias toward gly residues. Residues 1 to 96 (MSGGGPSGGG…PPPGVKLGRD (96 aa)) form a disordered region. Ser2 bears the N-acetylserine mark. Ser2 is subject to Phosphoserine. Phosphoserine; by PKB/AKT1 is present on Ser21. Residues 25-82 (PGGGGGGGGGGPGGSASGPGGTGGGKASVGAMGGGVGASSSGGGPGGSGGGGSGGPGA) are compositionally biased toward gly residues. Phosphoserine occurs at positions 72, 77, and 97. In terms of domain architecture, Protein kinase spans 119–403 (YTDIKVIGNG…PLEACAHSFF (285 aa)). Residues 125–133 (IGNGSFGVV) and Lys148 each bind ATP. Residue Asp244 is the Proton acceptor of the active site. Tyr279 bears the Phosphotyrosine mark. Residues 449–483 (AGTTTLTPSSQALTETPTSSDWQSTDATPTLTNSS) form a disordered region.

Belongs to the protein kinase superfamily. CMGC Ser/Thr protein kinase family. GSK-3 subfamily. Monomer. Interacts with ARRB2. Interacts with AXIN1 and CTNNB1/beta-catenin. Interacts with CTNND2. Interacts with LMBR1L. Interacts with DDX3X. Interacts with TNFRSF10B. Interacts with RICTOR; the interaction results in phosphorylation of RICTOR at 'Thr-1695' by GSK3A which facilitates FBXW7-mediated ubiquitination and subsequent degradation of RICTOR. As to quaternary structure, (Microbial infection) Interacts with M.tuberculosis PtpA. Phosphorylated by AKT1 at Ser-21: upon insulin-mediated signaling, the activated PKB/AKT1 protein kinase phosphorylates and deactivates GSK3A, resulting in the dephosphorylation and activation of GYS1. Activated by phosphorylation at Tyr-279. In terms of processing, (Microbial infection) Dephosphorylated at Tyr-279 by M.tuberculosis PtpA, which leads to prevention of apoptosis during early stages of microbial infection.

It catalyses the reaction L-seryl-[tau protein] + ATP = O-phospho-L-seryl-[tau protein] + ADP + H(+). The enzyme catalyses L-threonyl-[tau protein] + ATP = O-phospho-L-threonyl-[tau protein] + ADP + H(+). The catalysed reaction is L-seryl-[protein] + ATP = O-phospho-L-seryl-[protein] + ADP + H(+). It carries out the reaction L-threonyl-[protein] + ATP = O-phospho-L-threonyl-[protein] + ADP + H(+). Its activity is regulated as follows. Activated by phosphorylation at Tyr-279. In response to insulin, inhibited by phosphorylation at Ser-21 by PKB/AKT1; phosphorylation at this site causes a conformational change, preventing access of substrates to the active site. Inhibited by lithium. Functionally, constitutively active protein kinase that acts as a negative regulator in the hormonal control of glucose homeostasis, Wnt signaling and regulation of transcription factors and microtubules, by phosphorylating and inactivating glycogen synthase (GYS1 or GYS2), CTNNB1/beta-catenin, APC and AXIN1. Requires primed phosphorylation of the majority of its substrates. Contributes to insulin regulation of glycogen synthesis by phosphorylating and inhibiting GYS1 activity and hence glycogen synthesis. Regulates glycogen metabolism in liver, but not in muscle. May also mediate the development of insulin resistance by regulating activation of transcription factors. In Wnt signaling, regulates the level and transcriptional activity of nuclear CTNNB1/beta-catenin. Facilitates amyloid precursor protein (APP) processing and the generation of APP-derived amyloid plaques found in Alzheimer disease. May be involved in the regulation of replication in pancreatic beta-cells. Is necessary for the establishment of neuronal polarity and axon outgrowth. Through phosphorylation of the anti-apoptotic protein MCL1, may control cell apoptosis in response to growth factors deprivation. Acts as a regulator of autophagy by mediating phosphorylation of KAT5/TIP60 under starvation conditions which activates KAT5/TIP60 acetyltransferase activity and promotes acetylation of key autophagy regulators, such as ULK1 and RUBCNL/Pacer. Negatively regulates extrinsic apoptotic signaling pathway via death domain receptors. Promotes the formation of an anti-apoptotic complex, made of DDX3X, BRIC2 and GSK3B, at death receptors, including TNFRSF10B. The anti-apoptotic function is most effective with weak apoptotic signals and can be overcome by stronger stimulation. Phosphorylates mTORC2 complex component RICTOR at 'Thr-1695' which facilitates FBXW7-mediated ubiquitination and subsequent degradation of RICTOR. The sequence is that of Glycogen synthase kinase-3 alpha (GSK3A) from Homo sapiens (Human).